The primary structure comprises 228 residues: Cytidylate kinase (228 aa).

17–25 (GPTASGKGT) is an ATP binding site.

The protein belongs to the cytidylate kinase family. Type 1 subfamily.

The protein localises to the cytoplasm. The enzyme catalyses CMP + ATP = CDP + ADP. It catalyses the reaction dCMP + ATP = dCDP + ADP. In Burkholderia ambifaria (strain MC40-6), this protein is Cytidylate kinase.